The primary structure comprises 202 residues: MIDNGSMFIAIEGIDGSGKTTLAGDIASYTGFYLTREPTDRFCYDYIEADYNDESSIINFFLFTLDRYMHQKEIKNHLINGVISDRYVFSSIAYQGSGMEKRFKNMDETISWMLDVSRFIIMPDLIIYLKIDPGIALKRLNLRKNEKKNTDAFERLEMLKNVSKYYDYIFSGIIKIPVIKINAEMEYNYVKDEAIKGLNDYL.

Residue 13–20 (GIDGSGKT) coordinates ATP.

The protein belongs to the thymidylate kinase family.

It carries out the reaction dTMP + ATP = dTDP + ADP. The polypeptide is Probable thymidylate kinase (Picrophilus torridus (strain ATCC 700027 / DSM 9790 / JCM 10055 / NBRC 100828 / KAW 2/3)).